A 443-amino-acid polypeptide reads, in one-letter code: Thymidine phosphorylase (443 aa).

Belongs to the thymidine/pyrimidine-nucleoside phosphorylase family. As to quaternary structure, homodimer.

The enzyme catalyses thymidine + phosphate = 2-deoxy-alpha-D-ribose 1-phosphate + thymine. It participates in pyrimidine metabolism; dTMP biosynthesis via salvage pathway; dTMP from thymine: step 1/2. Functionally, the enzymes which catalyze the reversible phosphorolysis of pyrimidine nucleosides are involved in the degradation of these compounds and in their utilization as carbon and energy sources, or in the rescue of pyrimidine bases for nucleotide synthesis. This is Thymidine phosphorylase from Shewanella baltica (strain OS195).